Here is a 438-residue protein sequence, read N- to C-terminus: Ribosomal protein uS12 methylthiotransferase RimO (438 aa).

One can recognise an MTTase N-terminal domain in the interval Met-1–Asp-116. Residues Cys-10, Cys-46, Cys-79, Cys-147, Cys-151, and Cys-154 each coordinate [4Fe-4S] cluster. The Radical SAM core domain maps to Thr-133–Glu-363. Residues Glu-366–Thr-435 form the TRAM domain.

The protein belongs to the methylthiotransferase family. RimO subfamily. Requires [4Fe-4S] cluster as cofactor.

It is found in the cytoplasm. It catalyses the reaction L-aspartate(89)-[ribosomal protein uS12]-hydrogen + (sulfur carrier)-SH + AH2 + 2 S-adenosyl-L-methionine = 3-methylsulfanyl-L-aspartate(89)-[ribosomal protein uS12]-hydrogen + (sulfur carrier)-H + 5'-deoxyadenosine + L-methionine + A + S-adenosyl-L-homocysteine + 2 H(+). Its function is as follows. Catalyzes the methylthiolation of an aspartic acid residue of ribosomal protein uS12. The protein is Ribosomal protein uS12 methylthiotransferase RimO of Alkaliphilus oremlandii (strain OhILAs) (Clostridium oremlandii (strain OhILAs)).